Reading from the N-terminus, the 131-residue chain is Leptin receptor gene-related protein (131 aa).

4 consecutive transmembrane segments (helical) span residues 7–27 (LVGL…GCAL), 32–52 (VYWP…HFIA), 69–89 (LAYF…IILA), and 100–120 (GLVL…FLVF).

This sequence belongs to the OB-RGRP/VPS55 family.

It is found in the golgi apparatus membrane. It localises to the endosome membrane. Involved in protein trafficking. May be involved in the down-regulation of membrane protein levels. In Gallus gallus (Chicken), this protein is Leptin receptor gene-related protein (LEPROT).